The primary structure comprises 252 residues: MTQTPEALTTEQFKQAIIDKGQYYHIYHPFHVMMYEGKATQQQIQAWVANRYYYQINIPLKDAAIMANCPNQRVRQEWIQRMIDQDGEYPDGGGREAWLRLAEAVGLSREQVISEELVLPGVRFAVDAYVNFARRASWREAASSSLTELFAPQIHQSRLESWPQHYPWIDDKGYEYFRSRLSQARRDVEHGLTITLDSFTTHEQQQRMLEILQFKLDILWSILDALTLAYVHNEAPYHSVTQERVWHKGLFK.

This sequence belongs to the PqqC family.

It carries out the reaction 6-(2-amino-2-carboxyethyl)-7,8-dioxo-1,2,3,4,7,8-hexahydroquinoline-2,4-dicarboxylate + 3 O2 = pyrroloquinoline quinone + 2 H2O2 + 2 H2O + H(+). It functions in the pathway cofactor biosynthesis; pyrroloquinoline quinone biosynthesis. In terms of biological role, ring cyclization and eight-electron oxidation of 3a-(2-amino-2-carboxyethyl)-4,5-dioxo-4,5,6,7,8,9-hexahydroquinoline-7,9-dicarboxylic-acid to PQQ. The sequence is that of Pyrroloquinoline-quinone synthase from Acinetobacter baumannii (strain ACICU).